Reading from the N-terminus, the 197-residue chain is Phosphoheptose isomerase (197 aa).

One can recognise an SIS domain in the interval 36 to 197; that stretch reads MVNALLNEGK…IDSQLFGSEE (162 aa). 51–53 is a substrate binding site; that stretch reads NGG. Residues His60 and Glu64 each contribute to the Zn(2+) site. Residues Glu64, 93 to 94, 119 to 121, Ser124, and Gln174 each bind substrate; these read ND and STS. Gln174 and His182 together coordinate Zn(2+).

Belongs to the SIS family. GmhA subfamily. As to quaternary structure, homotetramer. It depends on Zn(2+) as a cofactor.

The protein resides in the cytoplasm. The catalysed reaction is 2 D-sedoheptulose 7-phosphate = D-glycero-alpha-D-manno-heptose 7-phosphate + D-glycero-beta-D-manno-heptose 7-phosphate. Its pathway is carbohydrate biosynthesis; D-glycero-D-manno-heptose 7-phosphate biosynthesis; D-glycero-alpha-D-manno-heptose 7-phosphate and D-glycero-beta-D-manno-heptose 7-phosphate from sedoheptulose 7-phosphate: step 1/1. Its function is as follows. Catalyzes the isomerization of sedoheptulose 7-phosphate in D-glycero-D-manno-heptose 7-phosphate. The sequence is that of Phosphoheptose isomerase from Pseudomonas putida (strain GB-1).